The chain runs to 356 residues: Pyrimidine monooxygenase RutA (356 aa).

FMN-binding positions include 49–50 (IK), asparagine 115, glutamate 124, 140–141 (RY), and serine 190.

Belongs to the NtaA/SnaA/DszA monooxygenase family. RutA subfamily.

It catalyses the reaction uracil + FMNH2 + NADH + O2 = (Z)-3-ureidoacrylate + FMN + NAD(+) + H2O + H(+). It carries out the reaction thymine + FMNH2 + NADH + O2 = (Z)-2-methylureidoacrylate + FMN + NAD(+) + H2O + H(+). Catalyzes the pyrimidine ring opening between N-3 and C-4 by an unusual flavin hydroperoxide-catalyzed mechanism, adding oxygen atoms in the process to yield ureidoacrylate peracid, that immediately reacts with FMN forming ureidoacrylate and FMN-N(5)-oxide. The FMN-N(5)-oxide reacts spontaneously with NADH to produce FMN. Requires the flavin reductase RutF to regenerate FMN in vivo. The chain is Pyrimidine monooxygenase RutA from Haliangium ochraceum (strain DSM 14365 / JCM 11303 / SMP-2).